The following is a 293-amino-acid chain: 33 kDa chaperonin (293 aa).

2 disulfide bridges follow: cysteine 236–cysteine 238 and cysteine 269–cysteine 272.

The protein belongs to the HSP33 family. Post-translationally, under oxidizing conditions two disulfide bonds are formed involving the reactive cysteines. Under reducing conditions zinc is bound to the reactive cysteines and the protein is inactive.

It localises to the cytoplasm. Functionally, redox regulated molecular chaperone. Protects both thermally unfolding and oxidatively damaged proteins from irreversible aggregation. Plays an important role in the bacterial defense system toward oxidative stress. The polypeptide is 33 kDa chaperonin (Lactobacillus delbrueckii subsp. bulgaricus (strain ATCC BAA-365 / Lb-18)).